The chain runs to 154 residues: Aspartate carbamoyltransferase regulatory chain (154 aa).

Zn(2+)-binding residues include Cys-109, Cys-114, Cys-138, and Cys-141.

The protein belongs to the PyrI family. As to quaternary structure, contains catalytic and regulatory chains. It depends on Zn(2+) as a cofactor.

In terms of biological role, involved in allosteric regulation of aspartate carbamoyltransferase. The chain is Aspartate carbamoyltransferase regulatory chain from Pectobacterium carotovorum subsp. carotovorum (strain PC1).